Here is a 298-residue protein sequence, read N- to C-terminus: Aspartate carbamoyltransferase catalytic subunit (298 aa).

Carbamoyl phosphate is bound by residues arginine 50 and threonine 51. Residue lysine 79 coordinates L-aspartate. Carbamoyl phosphate-binding residues include arginine 100, histidine 128, and glutamine 131. L-aspartate contacts are provided by arginine 160 and arginine 221. Residues leucine 260 and proline 261 each contribute to the carbamoyl phosphate site.

The protein belongs to the aspartate/ornithine carbamoyltransferase superfamily. ATCase family. As to quaternary structure, heterooligomer of catalytic and regulatory chains.

The catalysed reaction is carbamoyl phosphate + L-aspartate = N-carbamoyl-L-aspartate + phosphate + H(+). It participates in pyrimidine metabolism; UMP biosynthesis via de novo pathway; (S)-dihydroorotate from bicarbonate: step 2/3. Catalyzes the condensation of carbamoyl phosphate and aspartate to form carbamoyl aspartate and inorganic phosphate, the committed step in the de novo pyrimidine nucleotide biosynthesis pathway. The sequence is that of Aspartate carbamoyltransferase catalytic subunit from Methanosphaerula palustris (strain ATCC BAA-1556 / DSM 19958 / E1-9c).